The following is a 75-amino-acid chain: CLAVATA3/ESR (CLE)-related protein 2 (75 aa).

The signal sequence occupies residues 1–22; sequence MAKLSFTFCFLLFLLLSSIAAG. The interval 40–75 is disordered; sequence PSIEATSPTVEDDQAAGSHGKSPERLSPGGPDPQHH. A hydroxyproline mark is found at P67 and P70. P70 carries O-linked (Ara...) hydroxyproline glycosylation.

The protein belongs to the CLV3/ESR signal peptide family. Interacts with the extracellular leucine-rich repeat region of CLV1. In terms of processing, the O-glycosylation (arabinosylation) of the hydroxyproline Pro-70 enhances binding affinity of the CLE2p peptide for its receptor. As to expression, mostly expressed in roots and seedlings, and, to a lower extent, in apex.

The protein resides in the secreted. Its subcellular location is the extracellular space. Its function is as follows. Extracellular signal peptide that regulates cell fate. May act with CLV1 as a ligand-receptor pair in a signal transduction pathway, coordinating growth between adjacent meristematic regions. This is CLAVATA3/ESR (CLE)-related protein 2 from Arabidopsis thaliana (Mouse-ear cress).